Reading from the N-terminus, the 92-residue chain is MARSIKKGPFVDGHLMKKVETEGPNSKKIIKTWSRRSTITPEFIGVSLAVHNGKKFIPVFVTENMVGHKLGEFSPTRTFHGHAADKKSKVKK.

The protein belongs to the universal ribosomal protein uS19 family.

In terms of biological role, protein S19 forms a complex with S13 that binds strongly to the 16S ribosomal RNA. This Trichlorobacter lovleyi (strain ATCC BAA-1151 / DSM 17278 / SZ) (Geobacter lovleyi) protein is Small ribosomal subunit protein uS19.